The primary structure comprises 494 residues: Guanosine-5'-triphosphate,3'-diphosphate pyrophosphatase (494 aa).

This sequence belongs to the GppA/Ppx family. GppA subfamily.

It carries out the reaction guanosine 3'-diphosphate 5'-triphosphate + H2O = guanosine 3',5'-bis(diphosphate) + phosphate + H(+). It functions in the pathway purine metabolism; ppGpp biosynthesis; ppGpp from GTP: step 2/2. In terms of biological role, catalyzes the conversion of pppGpp to ppGpp. Guanosine pentaphosphate (pppGpp) is a cytoplasmic signaling molecule which together with ppGpp controls the 'stringent response', an adaptive process that allows bacteria to respond to amino acid starvation, resulting in the coordinated regulation of numerous cellular activities. In Cronobacter sakazakii (strain ATCC BAA-894) (Enterobacter sakazakii), this protein is Guanosine-5'-triphosphate,3'-diphosphate pyrophosphatase.